A 293-amino-acid chain; its full sequence is MASVNNYQVDCGSRSARIQPRINNGIHDEESLFEVLELSEEEFELDFHRLKSFNDVRVINNPDLSPECTNTAISRDETLESASSAFEVPSDEIAILSISSDSNKNSPPSEQPAPALRNIRSSSNSDRIDEWCLGSHLFNELHQNVPQSSDGVNHGFPVYSFKERELYTSAKLKKLTNAQRIAVQKLSRDLYPILRTCYREKTRRQLLTYHHERIFDDIPSFFPQRDFIFNYYSMPLEFDRLSDVDIDSSSRSRFTDESTGETLNRSPSAASSSLENTSWFGWTLLSRFLDREW.

Composition is skewed to polar residues over residues 98–108 and 260–273; these read ISSDSNKNSPP and GETL…ASSS. Disordered stretches follow at residues 98–121 and 250–273; these read ISSD…NIRS and SRSR…ASSS.

As to quaternary structure, interacts with PEX3, ATG8 and ATG11.

It is found in the peroxisome. Functionally, required for autophagic breakdown of peroxisomes, called pexophagy, through linking peroxisomes to the autophagy apparatus. Involved in regulation of the glyoxylate cycle. The polypeptide is Autophagy-related protein 36 (ATG36) (Saccharomyces cerevisiae (strain ATCC 204508 / S288c) (Baker's yeast)).